Consider the following 361-residue polypeptide: Peptide chain release factor 1 (361 aa).

Glutamine 240 carries the N5-methylglutamine modification.

This sequence belongs to the prokaryotic/mitochondrial release factor family. Methylated by PrmC. Methylation increases the termination efficiency of RF1.

It localises to the cytoplasm. In terms of biological role, peptide chain release factor 1 directs the termination of translation in response to the peptide chain termination codons UAG and UAA. The protein is Peptide chain release factor 1 of Mycobacterium leprae (strain Br4923).